A 311-amino-acid polypeptide reads, in one-letter code: Catechol 1,2-dioxygenase 1 (311 aa).

Positions 164, 200, 224, and 226 each coordinate Fe cation.

It belongs to the intradiol ring-cleavage dioxygenase family. Homodimer. The cofactor is Fe(3+).

The catalysed reaction is catechol + O2 = cis,cis-muconate + 2 H(+). The protein operates within aromatic compound metabolism; beta-ketoadipate pathway; 5-oxo-4,5-dihydro-2-furylacetate from catechol: step 1/3. Can cleave 4-methyl-, 4-chloro-, and 3-methoxycatechol at lower rates than catechol, but has no activity with 4-nitrocatechol or protocatechuic acid. This Acinetobacter lwoffii protein is Catechol 1,2-dioxygenase 1 (catA1).